A 525-amino-acid polypeptide reads, in one-letter code: GMP synthase [glutamine-hydrolyzing] (525 aa).

The Glutamine amidotransferase type-1 domain occupies 9-207; the sequence is RILILDFGSQ…VLDICGCEAL (199 aa). Cysteine 86 (nucleophile) is an active-site residue. Active-site residues include histidine 181 and glutamate 183. One can recognise a GMPS ATP-PPase domain in the interval 208 to 400; sequence WTPSKIAEDA…LGLPYDMVYR (193 aa). Residue 235–241 participates in ATP binding; that stretch reads SGGVDSS.

In terms of assembly, homodimer.

The catalysed reaction is XMP + L-glutamine + ATP + H2O = GMP + L-glutamate + AMP + diphosphate + 2 H(+). It participates in purine metabolism; GMP biosynthesis; GMP from XMP (L-Gln route): step 1/1. Its function is as follows. Catalyzes the synthesis of GMP from XMP. The polypeptide is GMP synthase [glutamine-hydrolyzing] (Pseudomonas fluorescens (strain Pf0-1)).